The primary structure comprises 307 residues: MLAQRTLKSLTKAVGVGLHSGQRVELTLRPAPPDSGIVFRRVDLPEPVDIVISPEAVTDTRLASTISSGSAKVHTVEHLMSACAGLGLDNLIIDITAEEVPILDGSASSFVFLLQSAGIALQDAPKRFVRILKPVEVREGEGANVKWARLSPYEGYKLSFEIDFDHPAVDSTGQRVEFDMGSGGYSRDIARARTFGFTKDVEMMRANGLALGGGLDNAIVMDDYKVLNSEGLRYNDEFVKHKILDAMGDLYLLGKPLLAAYSAFRSGHAMNNKLLRELQAHPEAYEIVTFDDEKSAPKGFSTLPRAW.

Residues H78, H241, and D245 each coordinate Zn(2+). Residue H268 is the Proton donor of the active site.

It belongs to the LpxC family. Zn(2+) serves as cofactor.

It carries out the reaction a UDP-3-O-[(3R)-3-hydroxyacyl]-N-acetyl-alpha-D-glucosamine + H2O = a UDP-3-O-[(3R)-3-hydroxyacyl]-alpha-D-glucosamine + acetate. The protein operates within glycolipid biosynthesis; lipid IV(A) biosynthesis; lipid IV(A) from (3R)-3-hydroxytetradecanoyl-[acyl-carrier-protein] and UDP-N-acetyl-alpha-D-glucosamine: step 2/6. Catalyzes the hydrolysis of UDP-3-O-myristoyl-N-acetylglucosamine to form UDP-3-O-myristoylglucosamine and acetate, the committed step in lipid A biosynthesis. The chain is UDP-3-O-acyl-N-acetylglucosamine deacetylase from Polaromonas naphthalenivorans (strain CJ2).